A 510-amino-acid chain; its full sequence is NAD(P)H-quinone oxidoreductase subunit 2 B, chloroplastic (510 aa).

14 consecutive transmembrane segments (helical) span residues 31-51 (FIFPECILIFGLILLLMIDLT), 59-79 (WFYFISSTSLVISITALLFRW), 99-119 (IFQFLILLCSTLCIPLSVEYI), 124-144 (MAITEFLLFVLTATLGGMFLC), 149-169 (LITIFVALECFSLCSYLLSGY), 184-204 (LLMGGASSSILVYGFSWLYGL), 229-249 (ISIALIFITVGLGFKLSLAPF), 261-281 (PTPVVAFLSVTSKVAALALAT), 295-315 (WHLLLEILAILSMILGNLLAI), 323-343 (MLAYSSIGQIGYVIIGIIVGD), 354-374 (YMLFYISMNLGTFACIVLFGL), 395-415 (ALSLALCLLSLGGLPPLAGFF), 418-438 (LYLFWCGWQAGLYFLVSIGLL), and 484-504 (MTVCVIASTILGISMNPILAI).

The protein belongs to the complex I subunit 2 family. As to quaternary structure, NDH is composed of at least 16 different subunits, 5 of which are encoded in the nucleus.

The protein localises to the plastid. Its subcellular location is the chloroplast thylakoid membrane. It catalyses the reaction a plastoquinone + NADH + (n+1) H(+)(in) = a plastoquinol + NAD(+) + n H(+)(out). The catalysed reaction is a plastoquinone + NADPH + (n+1) H(+)(in) = a plastoquinol + NADP(+) + n H(+)(out). Functionally, NDH shuttles electrons from NAD(P)H:plastoquinone, via FMN and iron-sulfur (Fe-S) centers, to quinones in the photosynthetic chain and possibly in a chloroplast respiratory chain. The immediate electron acceptor for the enzyme in this species is believed to be plastoquinone. Couples the redox reaction to proton translocation, and thus conserves the redox energy in a proton gradient. This is NAD(P)H-quinone oxidoreductase subunit 2 B, chloroplastic from Hordeum vulgare (Barley).